The primary structure comprises 251 residues: Phosphoribosylaminoimidazole-succinocarboxamide synthase (251 aa).

The protein belongs to the SAICAR synthetase family.

It catalyses the reaction 5-amino-1-(5-phospho-D-ribosyl)imidazole-4-carboxylate + L-aspartate + ATP = (2S)-2-[5-amino-1-(5-phospho-beta-D-ribosyl)imidazole-4-carboxamido]succinate + ADP + phosphate + 2 H(+). It participates in purine metabolism; IMP biosynthesis via de novo pathway; 5-amino-1-(5-phospho-D-ribosyl)imidazole-4-carboxamide from 5-amino-1-(5-phospho-D-ribosyl)imidazole-4-carboxylate: step 1/2. The protein is Phosphoribosylaminoimidazole-succinocarboxamide synthase of Phenylobacterium zucineum (strain HLK1).